The primary structure comprises 460 residues: GTPase Der (460 aa).

EngA-type G domains lie at 3-167 (FTFA…PEPD) and 189-364 (IRVA…ATWN). GTP-binding positions include 9–16 (GRPNVGKS), 56–60 (DTAGL), 119–122 (NKSE), 195–202 (GRPNAGKS), 242–246 (DTAGL), and 307–310 (NKWD). Positions 365–449 (RRVPTAALNR…PVRIMLREKA (85 aa)) constitute a KH-like domain.

This sequence belongs to the TRAFAC class TrmE-Era-EngA-EngB-Septin-like GTPase superfamily. EngA (Der) GTPase family. In terms of assembly, associates with the 50S ribosomal subunit.

Functionally, GTPase that plays an essential role in the late steps of ribosome biogenesis. This chain is GTPase Der, found in Rhodopseudomonas palustris (strain BisA53).